A 564-amino-acid polypeptide reads, in one-letter code: Centrosomal protein kizuna (564 aa).

The tract at residues 1 to 21 (MSEAGRAAAGPCPEVSPSRSQ) is disordered. Residues 28 to 50 (RCLRDSETRRLELERKLMEYKSS) adopt a coiled-coil conformation. Disordered stretches follow at residues 178–201 (QPAA…PTQA), 304–345 (TGPQ…EDEP), 442–465 (ECGD…PNDS), 487–519 (IGNN…RPEF), and 531–564 (AFWG…DFYD). The segment covering 313-324 (QQAASQDSSSSS) has biased composition (low complexity). Over residues 447 to 463 (SSVQSNESSYSLPSIPN) the composition is skewed to polar residues. The span at 493–519 (EAKESQEMCSERSSSSERSGDLSRPEF) shows a compositional bias: basic and acidic residues.

This sequence belongs to the kizuna family.

The protein resides in the cytoplasm. The protein localises to the cytoskeleton. It is found in the microtubule organizing center. It localises to the centrosome. Its subcellular location is the cilium basal body. Centrosomal protein required for establishing a robust mitotic centrosome architecture that can endure the forces that converge on the centrosomes during spindle formation. Required for stabilizing the expanded pericentriolar material around the centriole. The sequence is that of Centrosomal protein kizuna (KIZ) from Gallus gallus (Chicken).